A 294-amino-acid chain; its full sequence is Flavin-dependent thymidylate synthase (294 aa).

The 224-residue stretch at 27 to 250 (GFIRVIDYMG…PFTYEAFEEY (224 aa)) folds into the ThyX domain. FAD is bound by residues Thr73, 96-98 (RHR), and Glu104. Residues 93–96 (QWIR), 104–108 (EYSAR), and Arg189 each bind dUMP. The ThyX motif signature appears at 96–106 (RHRTASVNEYS). Residues 205–207 (NLH) and His211 contribute to the FAD site. DUMP is bound at residue Arg216. The active-site Involved in ionization of N3 of dUMP, leading to its activation is Arg216.

This sequence belongs to the thymidylate synthase ThyX family. Homotetramer. The cofactor is FAD.

The catalysed reaction is dUMP + (6R)-5,10-methylene-5,6,7,8-tetrahydrofolate + NADPH + H(+) = dTMP + (6S)-5,6,7,8-tetrahydrofolate + NADP(+). The protein operates within pyrimidine metabolism; dTTP biosynthesis. Catalyzes the reductive methylation of 2'-deoxyuridine-5'-monophosphate (dUMP) to 2'-deoxythymidine-5'-monophosphate (dTMP) while utilizing 5,10-methylenetetrahydrofolate (mTHF) as the methyl donor, and NADPH and FADH(2) as the reductant. The polypeptide is Flavin-dependent thymidylate synthase (Rickettsia prowazekii (strain Madrid E)).